A 118-amino-acid chain; its full sequence is Secreted RxLR effector protein 143 (118 aa).

A signal peptide spans 1-18 (MRHCAFLFRLFLIGYSCS). Residues 35-65 (DELPRAEQWDSDGKRILQADDPEHIPTEERG) are compositionally biased toward basic and acidic residues. The tract at residues 35-66 (DELPRAEQWDSDGKRILQADDPEHIPTEERGI) is disordered. The short motif at 49 to 64 (RILQADDPEHIPTEER) is the RxLR-dEER element.

This sequence belongs to the RxLR effector family.

Its subcellular location is the secreted. It is found in the host cell membrane. Functionally, secreted effector that completely suppresses the host cell death induced by cell death-inducing proteins. This Plasmopara viticola (Downy mildew of grapevine) protein is Secreted RxLR effector protein 143.